We begin with the raw amino-acid sequence, 536 residues long: Chaperonin GroEL (536 aa).

ATP is bound by residues 29 to 32, 86 to 90, glycine 412, and aspartate 493; these read TLGP and DGTTT.

It belongs to the chaperonin (HSP60) family. In terms of assembly, forms a cylinder of 14 subunits composed of two heptameric rings stacked back-to-back. Interacts with the co-chaperonin GroES.

Its subcellular location is the cytoplasm. It catalyses the reaction ATP + H2O + a folded polypeptide = ADP + phosphate + an unfolded polypeptide.. Functionally, together with its co-chaperonin GroES, plays an essential role in assisting protein folding. The GroEL-GroES system forms a nano-cage that allows encapsulation of the non-native substrate proteins and provides a physical environment optimized to promote and accelerate protein folding. The polypeptide is Chaperonin GroEL (Aster yellows witches'-broom phytoplasma (strain AYWB)).